Reading from the N-terminus, the 173-residue chain is 3-hydroxydecanoyl-[acyl-carrier-protein] dehydratase (173 aa).

The active site involves His71.

The protein belongs to the thioester dehydratase family. FabA subfamily. In terms of assembly, homodimer.

The protein localises to the cytoplasm. It carries out the reaction a (3R)-hydroxyacyl-[ACP] = a (2E)-enoyl-[ACP] + H2O. The enzyme catalyses (3R)-hydroxydecanoyl-[ACP] = (2E)-decenoyl-[ACP] + H2O. The catalysed reaction is (2E)-decenoyl-[ACP] = (3Z)-decenoyl-[ACP]. It functions in the pathway lipid metabolism; fatty acid biosynthesis. Its function is as follows. Necessary for the introduction of cis unsaturation into fatty acids. Catalyzes the dehydration of (3R)-3-hydroxydecanoyl-ACP to E-(2)-decenoyl-ACP and then its isomerization to Z-(3)-decenoyl-ACP. Can catalyze the dehydratase reaction for beta-hydroxyacyl-ACPs with saturated chain lengths up to 16:0, being most active on intermediate chain length. The chain is 3-hydroxydecanoyl-[acyl-carrier-protein] dehydratase from Bradyrhizobium sp. (strain ORS 278).